The chain runs to 142 residues: Interleukin-3 (142 aa).

The first 18 residues, 1–18 (MSHLPILLLLLLVSPGLQ), serve as a signal peptide directing secretion. N33 carries an N-linked (GlcNAc...) asparagine glycan. C34 and C102 are oxidised to a cystine.

This sequence belongs to the IL-3 family. As to quaternary structure, monomer. In terms of tissue distribution, activated T-cells, mast cells, natural killer cells.

The protein resides in the secreted. Functionally, granulocyte/macrophage colony-stimulating factors are cytokines that act in hematopoiesis by controlling the production, differentiation, and function of 2 related white cell populations of the blood, the granulocytes and the monocytes-macrophages. This CSF induces granulocytes, macrophages, mast cells, stem cells, erythroid cells, eosinophils and megakaryocytes. The chain is Interleukin-3 (IL3) from Callithrix jacchus (White-tufted-ear marmoset).